Reading from the N-terminus, the 172-residue chain is Adenine phosphoribosyltransferase (172 aa).

Belongs to the purine/pyrimidine phosphoribosyltransferase family. In terms of assembly, homodimer.

The protein resides in the cytoplasm. It carries out the reaction AMP + diphosphate = 5-phospho-alpha-D-ribose 1-diphosphate + adenine. It functions in the pathway purine metabolism; AMP biosynthesis via salvage pathway; AMP from adenine: step 1/1. Catalyzes a salvage reaction resulting in the formation of AMP, that is energically less costly than de novo synthesis. The sequence is that of Adenine phosphoribosyltransferase from Clostridium acetobutylicum (strain ATCC 824 / DSM 792 / JCM 1419 / IAM 19013 / LMG 5710 / NBRC 13948 / NRRL B-527 / VKM B-1787 / 2291 / W).